Reading from the N-terminus, the 284-residue chain is Large ribosomal subunit protein uL2 (284 aa).

2 disordered regions span residues 28-50 and 232-284; these read ELKG…FKKS and RGTA…DRRK. Basic residues predominate over residues 36 to 46; sequence RSVRPNKKLSF. A compositionally biased stretch (basic and acidic residues) spans 240–250; the sequence is DHPHGGGEGRH. Over residues 264 to 284 the composition is skewed to basic residues; the sequence is KGLKTRDKRKSNKWIVKDRRK.

Belongs to the universal ribosomal protein uL2 family. In terms of assembly, part of the 50S ribosomal subunit. Forms a bridge to the 30S subunit in the 70S ribosome.

Functionally, one of the primary rRNA binding proteins. Required for association of the 30S and 50S subunits to form the 70S ribosome, for tRNA binding and peptide bond formation. It has been suggested to have peptidyltransferase activity; this is somewhat controversial. Makes several contacts with the 16S rRNA in the 70S ribosome. The sequence is that of Large ribosomal subunit protein uL2 from Chlamydia trachomatis serovar L2 (strain ATCC VR-902B / DSM 19102 / 434/Bu).